Consider the following 635-residue polypeptide: Threonine--tRNA ligase (635 aa).

A TGS domain is found at 1-61; that stretch reads MIKITLKDGK…HKDSSLEILT (61 aa). The segment at 242–532 is catalytic; that stretch reads DHRKLGKELD…LIEQYAGAFP (291 aa). Zn(2+) is bound by residues Cys333, His384, and His509.

It belongs to the class-II aminoacyl-tRNA synthetase family. In terms of assembly, homodimer. Zn(2+) is required as a cofactor.

The protein resides in the cytoplasm. It catalyses the reaction tRNA(Thr) + L-threonine + ATP = L-threonyl-tRNA(Thr) + AMP + diphosphate + H(+). Functionally, catalyzes the attachment of threonine to tRNA(Thr) in a two-step reaction: L-threonine is first activated by ATP to form Thr-AMP and then transferred to the acceptor end of tRNA(Thr). Also edits incorrectly charged L-seryl-tRNA(Thr). The sequence is that of Threonine--tRNA ligase from Clostridium botulinum (strain Kyoto / Type A2).